Consider the following 206-residue polypeptide: Ribosomal RNA small subunit methyltransferase G (206 aa).

S-adenosyl-L-methionine-binding positions include Gly-74, Leu-79, 125-126 (VE), and Arg-140.

This sequence belongs to the methyltransferase superfamily. RNA methyltransferase RsmG family.

It localises to the cytoplasm. It catalyses the reaction guanosine(527) in 16S rRNA + S-adenosyl-L-methionine = N(7)-methylguanosine(527) in 16S rRNA + S-adenosyl-L-homocysteine. Specifically methylates the N7 position of guanine in position 527 of 16S rRNA. The sequence is that of Ribosomal RNA small subunit methyltransferase G from Shewanella oneidensis (strain ATCC 700550 / JCM 31522 / CIP 106686 / LMG 19005 / NCIMB 14063 / MR-1).